We begin with the raw amino-acid sequence, 268 residues long: Glucosamine-6-phosphate deaminase (268 aa).

D67 serves as the catalytic Proton acceptor; for enolization step. N137 acts as the For ring-opening step in catalysis. H139 functions as the Proton acceptor; for ring-opening step in the catalytic mechanism. The active-site For ring-opening step is the E144.

The protein belongs to the glucosamine/galactosamine-6-phosphate isomerase family. NagB subfamily. In terms of assembly, homohexamer.

The catalysed reaction is alpha-D-glucosamine 6-phosphate + H2O = beta-D-fructose 6-phosphate + NH4(+). Its pathway is amino-sugar metabolism; N-acetylneuraminate degradation; D-fructose 6-phosphate from N-acetylneuraminate: step 5/5. Functionally, catalyzes the reversible isomerization-deamination of glucosamine 6-phosphate (GlcN6P) to form fructose 6-phosphate (Fru6P) and ammonium ion. The sequence is that of Glucosamine-6-phosphate deaminase from Colwellia psychrerythraea (strain 34H / ATCC BAA-681) (Vibrio psychroerythus).